We begin with the raw amino-acid sequence, 217 residues long: Somatotropin (217 aa).

Residues 1–27 (MMAAGPRTSLLLAFALLCLPWTQMVGA) form the signal peptide. Histidine 46 contacts Zn(2+). Cysteine 79 and cysteine 190 form a disulfide bridge. Serine 132 is subject to Phosphoserine. Glutamate 199 is a binding site for Zn(2+). A disulfide bridge links cysteine 207 with cysteine 215.

The protein belongs to the somatotropin/prolactin family.

It localises to the secreted. In terms of biological role, plays an important role in growth control. Its major role in stimulating body growth is to stimulate the liver and other tissues to secrete IGF1. It stimulates both the differentiation and proliferation of myoblasts. It also stimulates amino acid uptake and protein synthesis in muscle and other tissues. The sequence is that of Somatotropin (GH1) from Giraffa camelopardalis (Giraffe).